The chain runs to 103 residues: Putative membrane protein insertion efficiency factor (103 aa).

This sequence belongs to the UPF0161 family.

Its subcellular location is the cell membrane. Could be involved in insertion of integral membrane proteins into the membrane. The polypeptide is Putative membrane protein insertion efficiency factor (Clavibacter sepedonicus (Clavibacter michiganensis subsp. sepedonicus)).